The following is a 648-amino-acid chain: Beta-glucuronidase (648 aa).

The signal sequence occupies residues 1 to 19; that stretch reads GLAMAWAVLGPLLWGCALA. N-linked (GlcNAc...) asparagine glycans are attached at residues N170, N269, and N417. Catalysis depends on E448, which acts as the Proton donor. Residue N628 is glycosylated (N-linked (GlcNAc...) asparagine).

This sequence belongs to the glycosyl hydrolase 2 family. In terms of assembly, homotetramer.

Its subcellular location is the lysosome. It carries out the reaction a beta-D-glucuronoside + H2O = D-glucuronate + an alcohol. Its activity is regulated as follows. Inhibited by L-aspartic acid. Its function is as follows. Plays an important role in the degradation of dermatan and keratan sulfates. The protein is Beta-glucuronidase (GUSB) of Chlorocebus aethiops (Green monkey).